A 918-amino-acid chain; its full sequence is MDYKQTLLMPKTAFPMRGNLPNKEPERQKKWEETNQYAKTLERTKGRPLFVLHDGPPYANGDIHIGHALNKVLKDFIVRYKSMTGYHAPYIPGWDTHGLPIETALTKKKKIKRKEMDIAAFRKLCEEYALGQINNQREQFKQLGVRGDWDNPYITLTKDYEASQIKVFGDMARKGYIYKGLKPVYWSPSSESALAEAEIEYQDKRSPSIYVAFEVKGGQALLSGGEKFIIWTTTPWTLPANLGISLHADLTYIVVQVGEEKYIIAEALFDDVSESLGWENPQVLQSFKGKEAEGIEAQHPFYDRTSLVMLGEHVTTDAGTGCVHTAPGHGEDDFYVSRSYGIDAFCPVDEKGVFTQEAPGFEGLFYDEANKIITEKLDASGALLKLEFITHSYPHDWRTKKPTIFRATSQWFASIKDFRVDILEEIKQVNWYPHWGETRLYNMVRDREDWCISRQRAWGVPIPVFYGEDGTPIITDETINHVSELFREHGSNIWFEKEAKELLPEGFTSEHSPNGNFAKETDIMDVWFDSGSSHEGVLLNRQNHQRPANVYLEGSDQYRGWFNSSLSTSVAVTGKAPYKAVISHGFVLDGNGRKMSKSLGNVIVPSKVQKQLGSDILRLWVSSVDYQADVRISDDILKQTSESYRKIRNTFRFLLANLADFNPNTDRVKEENMEEVDRYMVHRLQNVLAEAHKNYNQYEFAPVFQQIHHFCSVDLSSFYLDFAKDILYIEAKDHPRRRSIQTGYYEVLTSLVKLIAPIIPHTAEEVWEYIPEPEAESVHLTDIPEARDVAINEQTVDKWNHFMKIRDDVLKALEEARSEKVIGKSLEAKISIAAKDEGTKKVLDEMEHLHQYFIVSEAVIVDTLTDAKEGNVVNVQVEVHPGETCDRCWVSSETVGENKNHPSLCSRCADVVTKHYAD.

The 'HIGH' region signature appears at 57-67; it reads PYANGDIHIGH. Glutamate 553 lines the L-isoleucyl-5'-AMP pocket. The 'KMSKS' region motif lies at 594-598; it reads KMSKS. ATP is bound at residue lysine 597. Cysteine 885, cysteine 888, cysteine 905, and cysteine 908 together coordinate Zn(2+).

The protein belongs to the class-I aminoacyl-tRNA synthetase family. IleS type 1 subfamily. As to quaternary structure, monomer. Requires Zn(2+) as cofactor.

It localises to the cytoplasm. It carries out the reaction tRNA(Ile) + L-isoleucine + ATP = L-isoleucyl-tRNA(Ile) + AMP + diphosphate. Its function is as follows. Catalyzes the attachment of isoleucine to tRNA(Ile). As IleRS can inadvertently accommodate and process structurally similar amino acids such as valine, to avoid such errors it has two additional distinct tRNA(Ile)-dependent editing activities. One activity is designated as 'pretransfer' editing and involves the hydrolysis of activated Val-AMP. The other activity is designated 'posttransfer' editing and involves deacylation of mischarged Val-tRNA(Ile). The polypeptide is Isoleucine--tRNA ligase 1 (Oceanobacillus iheyensis (strain DSM 14371 / CIP 107618 / JCM 11309 / KCTC 3954 / HTE831)).